The primary structure comprises 108 residues: PTS system fructose-like EIIB component 1 (108 aa).

A PTS EIIB type-2 domain is found at M1–E101. C11 acts as the Phosphocysteine intermediate in catalysis. At C11 the chain carries Phosphocysteine; by EIIA.

The protein localises to the cytoplasm. It carries out the reaction D-fructose(out) + N(pros)-phospho-L-histidyl-[protein] = D-fructose 1-phosphate(in) + L-histidyl-[protein]. In terms of biological role, the phosphoenolpyruvate-dependent sugar phosphotransferase system (sugar PTS), a major carbohydrate active transport system, catalyzes the phosphorylation of incoming sugar substrates concomitantly with their translocation across the cell membrane. The enzyme II FryABC PTS system is involved in fructose transport. The sequence is that of PTS system fructose-like EIIB component 1 (fryB) from Shigella flexneri.